Consider the following 502-residue polypeptide: Facilitated trehalose transporter Tret1 (502 aa).

At 1–38 the chain is on the cytoplasmic side; that stretch reads MGVENTKQTMSSQNIKPAKDSDDVLHTQFKEVKRSPMR. The helical transmembrane segment at 39–59 threads the bilayer; the sequence is YTMQLLAALAVSMASLMIGYS. Residues 60 to 83 lie on the Extracellular side of the membrane; sequence SSYTSPALVSMRDNTTATFEVTMD. Residue asparagine 73 is glycosylated (N-linked (GlcNAc...) asparagine). Residues 84–104 form a helical membrane-spanning segment; it reads MAMWIGSIMPLSALIGGIIGG. Over 105–120 the chain is Cytoplasmic; the sequence is PCIEYIGRRNTILSTA. A helical membrane pass occupies residues 121–141; the sequence is LPFLAGWLFIALATNVAMILV. The Extracellular portion of the chain corresponds to 142-144; sequence GRS. Residues 145–165 traverse the membrane as a helical segment; the sequence is ICGFCVGVASLSLPVYLGESI. Over 166–172 the chain is Cytoplasmic; sequence QPEVRGS. Residues 173-193 form a helical membrane-spanning segment; it reads LGLLPTVFGNSGILMCFTAGM. The Extracellular portion of the chain corresponds to 194–199; the sequence is YLAWRN. Residues 200–220 form a helical membrane-spanning segment; it reads LALLGACIPIIFLILMFLIPE. Residues 221 to 282 are Cytoplasmic-facing; sequence TPRWYISKGK…ELFRKNHIKP (62 aa). Residues 283–303 traverse the membrane as a helical segment; it reads VFISLGLMFFQQFSGINAVIF. Topologically, residues 304–319 are extracellular; it reads YTVQIFKDSGSTVDEN. N-linked (GlcNAc...) asparagine glycosylation is present at asparagine 319. A helical membrane pass occupies residues 320–340; that stretch reads LSTIIVGLVNFISTFVAAMII. Residues 341 to 346 are Cytoplasmic-facing; the sequence is DRLGRK. Residues 347-367 form a helical membrane-spanning segment; that stretch reads MLLYISSILMCITLFTFGTFF. Over 368-376 the chain is Extracellular; sequence YVKELMDVT. The chain crosses the membrane as a helical span at residues 377–397; that stretch reads AFGWIPLMSLIVYVIGFSFGF. Topologically, residues 398–410 are cytoplasmic; the sequence is GPIPWLMMGEILP. The helical transmembrane segment at 411-433 threads the bilayer; it reads VKIRGTAASVATAFNWSCTFVVT. Residues 434 to 446 lie on the Extracellular side of the membrane; that stretch reads KTYEDLVLHIGPY. Residues 447 to 467 traverse the membrane as a helical segment; that stretch reads GTFWLFGTLVAVAFIFVIICV. At 468-502 the chain is on the cytoplasmic side; the sequence is PETRGRSLEEIERRFAGPVRRTSAIANLKPMPITI.

Belongs to the major facilitator superfamily. Sugar transporter (TC 2.A.1.1) family. Trehalose transporter subfamily.

The protein resides in the cell membrane. In terms of biological role, moderate-capacity facilitative transporter for trehalose. Does not transport maltose, sucrose or lactose. Mediates the bidirectional transfer of trehalose. Responsible for the transport of trehalose synthesized in the fat body and the incorporation of trehalose into other tissues that require a carbon source, thereby regulating trehalose levels in the hemolymph. This Apis mellifera ligustica (Common honeybee) protein is Facilitated trehalose transporter Tret1.